The following is a 669-amino-acid chain: UvrABC system protein B (669 aa).

In terms of domain architecture, Helicase ATP-binding spans 26–183; it reads EGLEDGLAHQ…RRLADLQYTR (158 aa). Residue 39 to 46 participates in ATP binding; sequence GVTGSGKT. Positions 92 to 115 match the Beta-hairpin motif; the sequence is YYDYYQPEAYVPSSDTFIEKDASV. Residues 431 to 593 enclose the Helicase C-terminal domain; it reads QVDDLLSEIR…IVPKGLNKKI (163 aa). The UVR domain maps to 629 to 664; the sequence is EKEIQRLETEMYQHAKDLEFEKAAQTRDKLQTLRAQ.

This sequence belongs to the UvrB family. As to quaternary structure, forms a heterotetramer with UvrA during the search for lesions. Interacts with UvrC in an incision complex.

It localises to the cytoplasm. The UvrABC repair system catalyzes the recognition and processing of DNA lesions. A damage recognition complex composed of 2 UvrA and 2 UvrB subunits scans DNA for abnormalities. Upon binding of the UvrA(2)B(2) complex to a putative damaged site, the DNA wraps around one UvrB monomer. DNA wrap is dependent on ATP binding by UvrB and probably causes local melting of the DNA helix, facilitating insertion of UvrB beta-hairpin between the DNA strands. Then UvrB probes one DNA strand for the presence of a lesion. If a lesion is found the UvrA subunits dissociate and the UvrB-DNA preincision complex is formed. This complex is subsequently bound by UvrC and the second UvrB is released. If no lesion is found, the DNA wraps around the other UvrB subunit that will check the other stand for damage. The protein is UvrABC system protein B of Proteus mirabilis (strain HI4320).